Reading from the N-terminus, the 340-residue chain is Nod factor export ATP-binding protein I (340 aa).

The segment covering 1 to 24 (MLKRKLGPEDLRRLETPAIERESH) has biased composition (basic and acidic residues). Residues 1 to 34 (MLKRKLGPEDLRRLETPAIERESHGQTSAKSSVP) are disordered. Residues 25-34 (GQTSAKSSVP) show a composition bias toward polar residues. An ABC transporter domain is found at 42–272 (VDFAGVTKSY…HIGCQVMEIY (231 aa)). Position 74-81 (74-81 (GPNGAGKS)) interacts with ATP.

Belongs to the ABC transporter superfamily. Lipooligosaccharide exporter (TC 3.A.1.102) family. The complex is composed of two ATP-binding proteins (NodI) and two transmembrane proteins (NodJ).

The protein localises to the cell inner membrane. Its function is as follows. Part of the ABC transporter complex NodIJ involved in the export of the nodulation factors (Nod factors), the bacterial signal molecules that induce symbiosis and subsequent nodulation induction. Nod factors are LCO (lipo-chitin oligosaccharide), a modified beta-1,4-linked N-acetylglucosamine oligosaccharide. This subunit is responsible for energy coupling to the transport system. This is Nod factor export ATP-binding protein I from Mesorhizobium japonicum (strain LMG 29417 / CECT 9101 / MAFF 303099) (Mesorhizobium loti (strain MAFF 303099)).